A 92-amino-acid chain; its full sequence is C-C motif chemokine 4-like (92 aa).

Positions 1-23 (MKLCVTVLSLLVLVAAFCSLALS) are cleaved as a signal peptide. Disulfide bonds link Cys-34–Cys-58 and Cys-35–Cys-74.

The protein belongs to the intercrine beta (chemokine CC) family. As to quaternary structure, interacts with CCR5. As to expression, detected in B-cells.

The protein localises to the secreted. Chemokine that induces chemotaxis of cells expressing CCR5 or CCR1. Inhibits HIV replication in peripheral blood monocytes that express CCR5. The chain is C-C motif chemokine 4-like (CCL4L1) from Homo sapiens (Human).